The following is a 430-amino-acid chain: Chromatin assembly factor 1 p55 subunit (430 aa).

Phosphoserine is present on residues S11 and S100. WD repeat units lie at residues 126-159 (NHEG…FDYT), 179-210 (GHQK…CLWD), 229-260 (GHTA…MIWD), 275-306 (AHTA…ALWD), 319-350 (SHKD…HVWD), and 376-407 (GHTA…QVWQ).

The protein belongs to the WD repeat RBAP46/RBAP48/MSI1 family. As to quaternary structure, probably binds directly to helix 1 of the histone fold of histone H4, a region that is not accessible when H4 is in chromatin. Self associates. Associates with chromatin. Component of the CAF-1 complex, composed of Caf1-55, Caf1-105 and Caf1-180; within the CAF-1 complex, Caf1-180 interacts directly with both Caf1-55 and Caf1-105. Component of the NuRD complex, composed of at least Caf1-55, Mi-2, MTA1-like and HDAC1/Rpd3. Within the NuRD complex, Caf1-55 may interact directly with Mi-2, MTA1-like and HDAC1/Rpd3. The NuRD complex may also associate with the methyl-DNA binding protein MBD-like via Caf1-55 and Mi-2. Component of the NURF complex, composed of Caf1-55, E(bx), Nurf-38 and Iswi. Component of the polycomb repressive complex 2 (PRC2, also known as the Esc/E(Z) complex), composed of Caf1-55, esc, E(z), Su(z)12, and possibly pho. PRC2 associates with the accessory components Jarid2 and jing to form the PRC2 Jarid2-jing variant (PRC2.2). PRC2 may also associate with Pcl and HDAC1/Rpd3 during early embryogenesis. Interacts with Rbf and Rbf2. Component of the DREAM complex at least composed of Myb, Caf1-55, mip40, mip120, mip130, E2f2, Dp, Rbf, Rbf2, lin-52, HDAC1/Rpd3 and l(3)mbt.

The protein localises to the nucleus. Core histone-binding subunit that may target chromatin assembly factors, chromatin remodeling factors and histone deacetylases to their histone substrates in a manner that is regulated by nucleosomal DNA. Component of several complexes which regulate chromatin metabolism. These include the chromatin assembly factor 1 (CAF-1) complex, which is required for chromatin assembly following DNA replication and DNA repair; the nucleosome remodeling and deacetylase complex (the NuRD complex), which promotes transcriptional repression by histone deacetylation and nucleosome remodeling; the nucleosome remodeling factor (NURF) complex, which catalyzes ATP-dependent nucleosome sliding and facilitates transcription of chromatin; and the polycomb group (PcG) repressor complex ESC-E(Z), which promotes repression of homeotic genes during development. Also required for transcriptional repression of E2F target genes by E2f2 and Rbf or Rbf2. The sequence is that of Chromatin assembly factor 1 p55 subunit from Drosophila melanogaster (Fruit fly).